Consider the following 229-residue polypeptide: Large ribosomal subunit protein uL1 (229 aa).

It belongs to the universal ribosomal protein uL1 family. Part of the 50S ribosomal subunit.

Functionally, binds directly to 23S rRNA. The L1 stalk is quite mobile in the ribosome, and is involved in E site tRNA release. In terms of biological role, protein L1 is also a translational repressor protein, it controls the translation of the L11 operon by binding to its mRNA. The sequence is that of Large ribosomal subunit protein uL1 from Clostridium botulinum (strain Loch Maree / Type A3).